The following is a 447-amino-acid chain: Serine/threonine-protein phosphatase 2A 55 kDa regulatory subunit B delta isoform (447 aa).

7 WD repeats span residues Ala-26–Pro-65, Glu-91–Glu-132, Ala-175–Asn-213, Glu-224–Arg-264, Glu-283–Glu-321, Glu-338–Leu-379, and Asp-414–Asn-447.

This sequence belongs to the phosphatase 2A regulatory subunit B family. PP2A consists of a common heterodimeric core enzyme, composed of a 36 kDa catalytic subunit (subunit C) and a 65 kDa constant regulatory subunit (PR65 or subunit A), that associates with a variety of regulatory subunits.

It is found in the cytoplasm. Functionally, substrate-recognition subunit of protein phosphatase 2A (PP2A) that plays a key role in cell cycle by controlling mitosis entry and exit. The activity of PP2A complexes containing PPP2R2D (PR55-delta) fluctuate during the cell cycle: the activity is high in interphase and low in mitosis. This Danio rerio (Zebrafish) protein is Serine/threonine-protein phosphatase 2A 55 kDa regulatory subunit B delta isoform (ppp2r2d).